Consider the following 491-residue polypeptide: UDP-N-acetylmuramate--L-alanine ligase (491 aa).

126-132 (GTHGKTT) contributes to the ATP binding site.

The protein belongs to the MurCDEF family.

It localises to the cytoplasm. It catalyses the reaction UDP-N-acetyl-alpha-D-muramate + L-alanine + ATP = UDP-N-acetyl-alpha-D-muramoyl-L-alanine + ADP + phosphate + H(+). Its pathway is cell wall biogenesis; peptidoglycan biosynthesis. Cell wall formation. In Shigella flexneri serotype 5b (strain 8401), this protein is UDP-N-acetylmuramate--L-alanine ligase.